A 484-amino-acid chain; its full sequence is Malonate-semialdehyde dehydrogenase 1 (484 aa).

Residues F153, K177, E180, R181, S230, and T252 each contribute to the NAD(+) site. The active-site Nucleophile is the C285. Residue E385 coordinates NAD(+).

The protein belongs to the aldehyde dehydrogenase family. IolA subfamily. Homotetramer.

It carries out the reaction 3-oxopropanoate + NAD(+) + CoA + H2O = hydrogencarbonate + acetyl-CoA + NADH + H(+). The enzyme catalyses 2-methyl-3-oxopropanoate + NAD(+) + CoA + H2O = propanoyl-CoA + hydrogencarbonate + NADH + H(+). The protein operates within polyol metabolism; myo-inositol degradation into acetyl-CoA; acetyl-CoA from myo-inositol: step 7/7. Functionally, catalyzes the oxidation of malonate semialdehyde (MSA) and methylmalonate semialdehyde (MMSA) into acetyl-CoA and propanoyl-CoA, respectively. Is involved in a myo-inositol catabolic pathway. Bicarbonate, and not CO2, is the end-product of the enzymatic reaction. This Geobacillus thermodenitrificans (strain NG80-2) protein is Malonate-semialdehyde dehydrogenase 1.